Here is a 291-residue protein sequence, read N- to C-terminus: Translocon-associated protein subunit alpha (291 aa).

The signal sequence occupies residues 1–20 (MRLLPRLLLLLLLVFPATVL). The Lumenal segment spans residues 21–207 (FRGGPRGSLA…EREDGLDGET (187 aa)). The segment at 34 to 83 (DLTEDEETVEDSIIEDEDDEAEVEEDEPTDLVEDKEEEDVSGEPEASPSA) is disordered. The span at 35 to 75 (LTEDEETVEDSIIEDEDDEAEVEEDEPTDLVEDKEEEDVSG) shows a compositional bias: acidic residues. N136 and N191 each carry an N-linked (GlcNAc...) asparagine glycan. Residues 208–228 (IFMYMFLAGLGLLVIVGLHQL) traverse the membrane as a helical segment. Residues 229–291 (LESRKRKRPV…AQKRSVGSDE (63 aa)) are Cytoplasmic-facing. At S247 the chain carries Phosphoserine. A Phosphothreonine modification is found at T260. A disordered region spans residues 263–291 (QIMQSRRDKASPRRLPRKRAQKRSVGSDE). Phosphoserine is present on S273. Basic residues predominate over residues 274-284 (PRRLPRKRAQK).

It belongs to the TRAP-alpha family. In terms of assembly, heterotetramer of TRAP-alpha, TRAP-beta, TRAP-delta and TRAP-gamma. Interacts with palmitoylated calnexin (CALX), the interaction is required for efficient folding of glycosylated proteins. In terms of processing, phosphorylated in its cytoplasmic tail.

It is found in the endoplasmic reticulum membrane. Functionally, TRAP proteins are part of a complex whose function is to bind calcium to the ER membrane and thereby regulate the retention of ER resident proteins. May be involved in the recycling of the translocation apparatus after completion of the translocation process or may function as a membrane-bound chaperone facilitating folding of translocated proteins. The sequence is that of Translocon-associated protein subunit alpha (SSR1) from Pongo abelii (Sumatran orangutan).